The following is a 261-amino-acid chain: MSRVADTIARRKGEAAGALIGYLPAGFPDLRTSVDAAVALAENGVDVIELGLPYSDPVMDGAVIQAATQRALANGFRLRDGFAAVREITSRVDAPVLVMTYWNPVMQYGVDRFADDFATAGGAGLITPDLIPDEGADWLAASERTGLDRVFLAAPSSTEARRRQTAANSRGFVYAVSTMGITGVRTDVDAAARTLVGRLREAGALSACVGLGISSAAQVAEVLDYADGAIVGSALVTALAKGGVAAAGRIAAELARGAVRG.

Catalysis depends on proton acceptor residues glutamate 49 and aspartate 60.

This sequence belongs to the TrpA family. As to quaternary structure, tetramer of two alpha and two beta chains.

The catalysed reaction is (1S,2R)-1-C-(indol-3-yl)glycerol 3-phosphate + L-serine = D-glyceraldehyde 3-phosphate + L-tryptophan + H2O. It participates in amino-acid biosynthesis; L-tryptophan biosynthesis; L-tryptophan from chorismate: step 5/5. Its function is as follows. The alpha subunit is responsible for the aldol cleavage of indoleglycerol phosphate to indole and glyceraldehyde 3-phosphate. The polypeptide is Tryptophan synthase alpha chain (Leifsonia xyli subsp. xyli (strain CTCB07)).